The sequence spans 378 residues: Cytochrome b (378 aa).

A run of 4 helical transmembrane segments spans residues 34-54, 78-100, 113-133, and 179-199; these read FGSL…FLSM, WLLR…CHIG, TWNV…VGYV, and FFSF…VHLL. Positions 84 and 98 each coordinate heme b. The heme b site is built by His-183 and His-197. His-202 is a binding site for a ubiquinone. 4 helical membrane passes run 225 to 245, 289 to 306, 313 to 342, and 350 to 369; these read YSTK…IVVL, LGGV…FCLP, KFRS…WIGM, and IFIG…LNPL.

It belongs to the cytochrome b family. As to quaternary structure, the main subunits of complex b-c1 are: cytochrome b, cytochrome c1 and the Rieske protein. Heme b is required as a cofactor.

It is found in the mitochondrion inner membrane. Functionally, component of the ubiquinol-cytochrome c reductase complex (complex III or cytochrome b-c1 complex) that is part of the mitochondrial respiratory chain. The b-c1 complex mediates electron transfer from ubiquinol to cytochrome c. Contributes to the generation of a proton gradient across the mitochondrial membrane that is then used for ATP synthesis. The chain is Cytochrome b (mt:Cyt-b) from Loxocorone allax (Goblet worm).